The primary structure comprises 218 residues: Small ribosomal subunit protein uS3 (218 aa).

The 69-residue stretch at leucine 38–lysine 106 folds into the KH type-2 domain.

The protein belongs to the universal ribosomal protein uS3 family. Part of the 30S ribosomal subunit. Forms a tight complex with proteins S10 and S14.

Its function is as follows. Binds the lower part of the 30S subunit head. Binds mRNA in the 70S ribosome, positioning it for translation. The chain is Small ribosomal subunit protein uS3 from Legionella pneumophila (strain Paris).